The primary structure comprises 591 residues: L-fucose isomerase (591 aa).

Catalysis depends on proton acceptor residues Glu-337 and Asp-361. Residues Glu-337, Asp-361, and His-528 each coordinate Mn(2+).

The protein belongs to the L-fucose isomerase family. As to quaternary structure, homohexamer. Mn(2+) is required as a cofactor.

It localises to the cytoplasm. The catalysed reaction is L-fucose = L-fuculose. Its pathway is carbohydrate degradation; L-fucose degradation; L-lactaldehyde and glycerone phosphate from L-fucose: step 1/3. Its function is as follows. Converts the aldose L-fucose into the corresponding ketose L-fuculose. The protein is L-fucose isomerase of Escherichia coli O17:K52:H18 (strain UMN026 / ExPEC).